Reading from the N-terminus, the 299-residue chain is uncharacterized protein (299 aa).

Belongs to the glycosyltransferase 2 family.

This is an uncharacterized protein from Mycoplasma pneumoniae (strain ATCC 29342 / M129 / Subtype 1) (Mycoplasmoides pneumoniae).